Here is a 344-residue protein sequence, read N- to C-terminus: L-rhamnose-proton symporter (344 aa).

10 helical membrane passes run 4–24 (AITMGIFWHLIGAASAACFYA), 38–58 (WSVGGIVSWIILPWAISALLL), 68–88 (FSLSTLLPVFLFGAMCGIGNI), 101–121 (MGIGIAIGITLIVGTLMTPII), 137–157 (TLLGVLVALIGVGIVTRAGQL), 175–195 (LVLAVMCGIFSAGMSFAMNAA), 214–234 (LPSYVVIMGGGAIINLGFCFI), 259–279 (VLLSTLGGLMWYLQFFFYAWG), 290–310 (ISWMLHMSFYVLCGGIVGLVL), and 323–343 (VLSLGCVVIIVAANIVGIGMA).

This sequence belongs to the L-rhamnose transporter (TC 2.A.7.6) family.

The protein localises to the cell inner membrane. It catalyses the reaction L-rhamnopyranose(in) + H(+)(in) = L-rhamnopyranose(out) + H(+)(out). In terms of biological role, uptake of L-rhamnose across the cytoplasmic membrane with the concomitant transport of protons into the cell (symport system). The chain is L-rhamnose-proton symporter from Escherichia coli O9:H4 (strain HS).